Reading from the N-terminus, the 171-residue chain is Ribosome maturation factor RimM (171 aa).

Residues 93-167 form the PRC barrel domain; it reads DGVYYYKDIF…KVYVELMEGL (75 aa).

The protein belongs to the RimM family. As to quaternary structure, binds ribosomal protein uS19.

The protein localises to the cytoplasm. An accessory protein needed during the final step in the assembly of 30S ribosomal subunit, possibly for assembly of the head region. Essential for efficient processing of 16S rRNA. May be needed both before and after RbfA during the maturation of 16S rRNA. It has affinity for free ribosomal 30S subunits but not for 70S ribosomes. This is Ribosome maturation factor RimM from Lactobacillus helveticus (strain DPC 4571).